The chain runs to 156 residues: 3-hydroxyacyl-[acyl-carrier-protein] dehydratase FabZ (156 aa).

Residue His-57 is part of the active site.

This sequence belongs to the thioester dehydratase family. FabZ subfamily.

The protein localises to the cytoplasm. The enzyme catalyses a (3R)-hydroxyacyl-[ACP] = a (2E)-enoyl-[ACP] + H2O. Functionally, involved in unsaturated fatty acids biosynthesis. Catalyzes the dehydration of short chain beta-hydroxyacyl-ACPs and long chain saturated and unsaturated beta-hydroxyacyl-ACPs. The polypeptide is 3-hydroxyacyl-[acyl-carrier-protein] dehydratase FabZ (Anaeromyxobacter sp. (strain K)).